Consider the following 354-residue polypeptide: Sorbitol dehydrogenase (354 aa).

C43 provides a ligand contact to Zn(2+). Y49 is a substrate binding site. Zn(2+) contacts are provided by H67 and E68. E153 is a binding site for substrate. I181, D201, and R206 together coordinate NAD(+). A phosphoserine mark is found at S208 and S222. NAD(+) contacts are provided by residues 270-272 and 294-296; these read VGL and VFR. 2 residues coordinate substrate: R296 and Y297.

Belongs to the zinc-containing alcohol dehydrogenase family. Homotetramer. It depends on Zn(2+) as a cofactor. Expressed in liver.

It is found in the mitochondrion membrane. Its subcellular location is the cell projection. The protein resides in the cilium. It localises to the flagellum. It catalyses the reaction xylitol + NAD(+) = D-xylulose + NADH + H(+). It carries out the reaction L-iditol + NAD(+) = keto-L-sorbose + NADH + H(+). The enzyme catalyses keto-D-fructose + NADH + H(+) = D-sorbitol + NAD(+). Its function is as follows. Polyol dehydrogenase that catalyzes the reversible NAD(+)-dependent oxidation of various sugar alcohols. Is mostly active with xylitol, L-iditol and D-sorbitol (D-glucitol) as substrates, leading to the C2-oxidized products D-xylulose, L-sorbose and D-fructose, respectively. Is a key enzyme in the polyol pathway that interconverts glucose and fructose via sorbitol, which constitutes an important alternate route for glucose metabolism. May play a role in sperm motility by using sorbitol as an alternative energy source for sperm motility. This is Sorbitol dehydrogenase (SORD) from Ovis aries (Sheep).